The following is a 397-amino-acid chain: 1-deoxy-D-xylulose 5-phosphate reductoisomerase (397 aa).

Residues threonine 10, glycine 11, serine 12, isoleucine 13, asparagine 39, and asparagine 125 each coordinate NADPH. 1-deoxy-D-xylulose 5-phosphate is bound at residue lysine 126. Glutamate 127 is a binding site for NADPH. Mn(2+) is bound at residue aspartate 151. Serine 152, glutamate 153, serine 187, and histidine 210 together coordinate 1-deoxy-D-xylulose 5-phosphate. Residue glutamate 153 participates in Mn(2+) binding. An NADPH-binding site is contributed by glycine 216. The 1-deoxy-D-xylulose 5-phosphate site is built by serine 223, asparagine 228, lysine 229, and glutamate 232. Mn(2+) is bound at residue glutamate 232.

It belongs to the DXR family. Homodimer. It depends on Mg(2+) as a cofactor. Mn(2+) serves as cofactor.

It carries out the reaction 2-C-methyl-D-erythritol 4-phosphate + NADP(+) = 1-deoxy-D-xylulose 5-phosphate + NADPH + H(+). It participates in isoprenoid biosynthesis; isopentenyl diphosphate biosynthesis via DXP pathway; isopentenyl diphosphate from 1-deoxy-D-xylulose 5-phosphate: step 1/6. Functionally, catalyzes the NADPH-dependent rearrangement and reduction of 1-deoxy-D-xylulose-5-phosphate (DXP) to 2-C-methyl-D-erythritol 4-phosphate (MEP). This is 1-deoxy-D-xylulose 5-phosphate reductoisomerase from Wigglesworthia glossinidia brevipalpis.